A 202-amino-acid chain; its full sequence is Small ribosomal subunit protein uS5 (202 aa).

An S5 DRBM domain is found at 50-113; that stretch reads LKQELLNVNI…REAKLNLIPV (64 aa).

This sequence belongs to the universal ribosomal protein uS5 family. In terms of assembly, part of the 30S ribosomal subunit. Contacts protein S4.

In terms of biological role, with S4 and S12 plays an important role in translational accuracy. The sequence is that of Small ribosomal subunit protein uS5 from Pyrobaculum arsenaticum (strain DSM 13514 / JCM 11321 / PZ6).